A 173-amino-acid chain; its full sequence is Phosphopantetheine adenylyltransferase (173 aa).

Residue T9 coordinates substrate. ATP is bound by residues 9–10 (TF) and H17. Positions 41, 75, and 89 each coordinate substrate. ATP-binding positions include 90–92 (GLR), E100, and 125–131 (HIYLSSS).

The protein belongs to the bacterial CoaD family. Homohexamer. The cofactor is Mg(2+).

It is found in the cytoplasm. The catalysed reaction is (R)-4'-phosphopantetheine + ATP + H(+) = 3'-dephospho-CoA + diphosphate. Its pathway is cofactor biosynthesis; coenzyme A biosynthesis; CoA from (R)-pantothenate: step 4/5. Functionally, reversibly transfers an adenylyl group from ATP to 4'-phosphopantetheine, yielding dephospho-CoA (dPCoA) and pyrophosphate. This chain is Phosphopantetheine adenylyltransferase, found in Methylacidiphilum infernorum (isolate V4) (Methylokorus infernorum (strain V4)).